We begin with the raw amino-acid sequence, 72 residues long: Translation initiation factor IF-1 (72 aa).

The region spanning 1–72 is the S1-like domain; sequence MSKQDVIEVE…TRGRIVYRYK (72 aa).

Belongs to the IF-1 family. Component of the 30S ribosomal translation pre-initiation complex which assembles on the 30S ribosome in the order IF-2 and IF-3, IF-1 and N-formylmethionyl-tRNA(fMet); mRNA recruitment can occur at any time during PIC assembly.

Its subcellular location is the cytoplasm. One of the essential components for the initiation of protein synthesis. Stabilizes the binding of IF-2 and IF-3 on the 30S subunit to which N-formylmethionyl-tRNA(fMet) subsequently binds. Helps modulate mRNA selection, yielding the 30S pre-initiation complex (PIC). Upon addition of the 50S ribosomal subunit IF-1, IF-2 and IF-3 are released leaving the mature 70S translation initiation complex. The protein is Translation initiation factor IF-1 of Pelotomaculum thermopropionicum (strain DSM 13744 / JCM 10971 / SI).